A 101-amino-acid polypeptide reads, in one-letter code: Large ribosomal subunit protein uL24 (101 aa).

It belongs to the universal ribosomal protein uL24 family. As to quaternary structure, part of the 50S ribosomal subunit.

Functionally, one of two assembly initiator proteins, it binds directly to the 5'-end of the 23S rRNA, where it nucleates assembly of the 50S subunit. One of the proteins that surrounds the polypeptide exit tunnel on the outside of the subunit. The chain is Large ribosomal subunit protein uL24 from Streptococcus thermophilus (strain CNRZ 1066).